The following is a 1229-amino-acid chain: Nuclear envelope pore membrane protein POM 121C (1229 aa).

A compositionally biased stretch (low complexity) spans 1–10 (MSPAAAAAGA). Residues 1–24 (MSPAAAAAGAGERRRPIASVRDGR) form a disordered region. The interval 1–40 (MSPAAAAAGAGERRRPIASVRDGRGRGCGGPAGAALLGLS) is cisternal side. Positions 1–398 (MSPAAAAAGA…AITSSYSSTR (398 aa)) are required for targeting to the nucleus and nuclear pore complex. Basic and acidic residues predominate over residues 11-24 (GERRRPIASVRDGR). The chain crosses the membrane as a helical span at residues 41-61 (LVGLLLYLVPAAAALAWLAVG). A pore side region spans residues 62–1229 (TTAAWWGLSR…QARRQHTRKK (1168 aa)). The residue at position 81 (Ser-81) is a Phosphoserine. Disordered regions lie at residues 90–200 (RTLF…LPDR), 296–507 (KKKK…LGYS), 579–747 (KKMQ…TAPT), 936–966 (PLPS…ALTP), and 1202–1229 (PSFS…TRKK). Over residues 155-166 (ARPAPRSTPPSQ) the composition is skewed to pro residues. The segment covering 176-189 (PSLPTPLLRPSGRP) has biased composition (low complexity). Ser-322, Ser-328, Ser-348, Ser-370, and Ser-373 each carry phosphoserine. A compositionally biased stretch (polar residues) spans 374 to 400 (LTGAYTSGIPSSSRNAITSSYSSTRGI). A compositionally biased stretch (low complexity) spans 409-422 (PSSSPFSSPASSRS). Basic and acidic residues-rich tracts occupy residues 427–439 (RPAK…ELCH) and 449–463 (ADKE…DTTP). Polar residues predominate over residues 468 to 479 (NSNSQSTPGSSG). A compositionally biased stretch (low complexity) spans 612–629 (PPLGLSQSGPPGLLPSPS). Over residues 660-673 (QAETATKPQATSAP) the composition is skewed to polar residues. Low complexity-rich tracts occupy residues 689 to 703 (SPSS…SASP) and 726 to 747 (SVSA…TAPT). Residues 1219 to 1229 (LQARRQHTRKK) are compositionally biased toward basic residues.

It belongs to the POM121 family.

It localises to the nucleus. The protein resides in the nuclear pore complex. It is found in the nucleus membrane. Its subcellular location is the endoplasmic reticulum membrane. In terms of biological role, essential component of the nuclear pore complex (NPC). The repeat-containing domain may be involved in anchoring components of the pore complex to the pore membrane. When overexpressed in cells induces the formation of cytoplasmic annulate lamellae (AL). This chain is Nuclear envelope pore membrane protein POM 121C (POM121C), found in Homo sapiens (Human).